The following is a 316-amino-acid chain: Biotin synthase (316 aa).

The Radical SAM core domain maps to 38-266 (YKGKKIELCA…DKDIRVCGGR (229 aa)). [4Fe-4S] cluster is bound by residues cysteine 56, cysteine 60, and cysteine 63. 4 residues coordinate [2Fe-2S] cluster: serine 100, cysteine 131, cysteine 191, and arginine 261.

The protein belongs to the radical SAM superfamily. Biotin synthase family. As to quaternary structure, homodimer. [4Fe-4S] cluster serves as cofactor. The cofactor is [2Fe-2S] cluster.

It catalyses the reaction (4R,5S)-dethiobiotin + (sulfur carrier)-SH + 2 reduced [2Fe-2S]-[ferredoxin] + 2 S-adenosyl-L-methionine = (sulfur carrier)-H + biotin + 2 5'-deoxyadenosine + 2 L-methionine + 2 oxidized [2Fe-2S]-[ferredoxin]. Its pathway is cofactor biosynthesis; biotin biosynthesis; biotin from 7,8-diaminononanoate: step 2/2. Its function is as follows. Catalyzes the conversion of dethiobiotin (DTB) to biotin by the insertion of a sulfur atom into dethiobiotin via a radical-based mechanism. The chain is Biotin synthase from Thermodesulfovibrio yellowstonii (strain ATCC 51303 / DSM 11347 / YP87).